The sequence spans 599 residues: Leucine zipper putative tumor suppressor 1 (599 aa).

Glycine 2 carries N-myristoyl glycine lipidation. 2 disordered regions span residues 135–190 (GAIL…TTSS) and 288–324 (EFASGQTFEERPRRTRDELECLEPKSKLKPPSQKSQR). A compositionally biased stretch (basic and acidic residues) spans 153 to 162 (PPDKPKEQEL). A compositionally biased stretch (polar residues) spans 174-190 (SGRNSMSSLPTHSTTSS). The stretch at 256-572 (LSTDECTIQE…LEKALQQLAR (317 aa)) forms a coiled coil. Residues 288 to 313 (EFASGQTFEERPRRTRDELECLEPKS) are compositionally biased toward basic and acidic residues.

Belongs to the LZTS family. In terms of assembly, binds EEF1G, TLK2 and CDK1. Post-translationally, phosphorylated on serine residues. Hyperphosphorylated by the cAMP-dependent kinase PKA during cell-cycle progression.

It is found in the cytoplasm. Its subcellular location is the cell membrane. The protein resides in the cell projection. It localises to the dendritic spine. The protein localises to the postsynaptic density. It is found in the synapse. Involved in the regulation of cell growth. May stabilize the active CDC2-cyclin B1 complex and thereby contribute to the regulation of the cell cycle and the prevention of uncontrolled cell proliferation. May act as tumor suppressor. The protein is Leucine zipper putative tumor suppressor 1 (Lzts1) of Mus musculus (Mouse).